The sequence spans 361 residues: Phospho-N-acetylmuramoyl-pentapeptide-transferase (361 aa).

The next 10 membrane-spanning stretches (helical) occupy residues 28–48 (LAII…IKFL), 74–94 (TMGG…LADL), 99–119 (TWIT…DDYA), 133–153 (SKLL…EYLD), 168–188 (LSLD…VGSS), 203–223 (VPIA…GNLI), 236–256 (TGEL…FLWF), 263–283 (VFMG…ISVI), 288–308 (IVLA…ILQV), and 338–358 (KVVI…LSSL).

It belongs to the glycosyltransferase 4 family. MraY subfamily. Requires Mg(2+) as cofactor.

It is found in the cell inner membrane. The enzyme catalyses UDP-N-acetyl-alpha-D-muramoyl-L-alanyl-gamma-D-glutamyl-meso-2,6-diaminopimeloyl-D-alanyl-D-alanine + di-trans,octa-cis-undecaprenyl phosphate = di-trans,octa-cis-undecaprenyl diphospho-N-acetyl-alpha-D-muramoyl-L-alanyl-D-glutamyl-meso-2,6-diaminopimeloyl-D-alanyl-D-alanine + UMP. It functions in the pathway cell wall biogenesis; peptidoglycan biosynthesis. Functionally, catalyzes the initial step of the lipid cycle reactions in the biosynthesis of the cell wall peptidoglycan: transfers peptidoglycan precursor phospho-MurNAc-pentapeptide from UDP-MurNAc-pentapeptide onto the lipid carrier undecaprenyl phosphate, yielding undecaprenyl-pyrophosphoryl-MurNAc-pentapeptide, known as lipid I. The chain is Phospho-N-acetylmuramoyl-pentapeptide-transferase from Rickettsia massiliae (strain Mtu5).